Reading from the N-terminus, the 207-residue chain is 3-hexulose-6-phosphate synthase (207 aa).

Belongs to the HPS/KGPDC family. HPS subfamily.

It carries out the reaction D-ribulose 5-phosphate + formaldehyde = D-arabino-hex-3-ulose 6-phosphate. The protein operates within one-carbon metabolism; formaldehyde assimilation via RuMP pathway; D-fructose 6-phosphate from D-ribulose 5-phosphate and formaldehyde: step 1/2. Its function is as follows. Catalyzes the condensation of ribulose 5-phosphate with formaldehyde to form 3-hexulose 6-phosphate. The sequence is that of 3-hexulose-6-phosphate synthase (rmpA) from Mycobacterium gastri.